The sequence spans 504 residues: DnaJ homolog subfamily C member 3 (504 aa).

Positions 1-31 (MVAPGSVRSRLGAVFPFLLVLVDLQYEGAEC) are cleaved as a signal peptide. TPR repeat units follow at residues 37–70 (VEKH…DPDN), 72–104 (IAYY…KMDF), 105–138 (TAAR…NPSE), 154–187 (MQRL…CVWD), 188–221 (AELR…KNDN), 222–255 (TEAF…DQDH), 268–301 (LNKL…EPSV), 306–339 (VRSK…EPDN), and 340–373 (VNAL…NEND). Cysteines 248 and 258 form a disulfide. A Phosphoserine modification is found at serine 274. Cysteine 313 and cysteine 329 are disulfide-bonded. A flexible linker region spans residues 375 to 393 (QIREGLEKAQRLLKQSQKR). One can recognise a J domain in the interval 394–462 (DYYKILGVKR…EMRRKFDDGE (69 aa)). The interval 451-481 (DPEMRRKFDDGEDPLDAETQQGGGSNPFHRS) is disordered. A Phosphoserine modification is found at serine 475.

As to quaternary structure, interacts with EIF2AK2 and EIF2AK3. Forms a trimeric complex with DNAJB1 and HSPA8. Interacts with THAP12.

It localises to the endoplasmic reticulum. Functionally, involved in the unfolded protein response (UPR) during ER stress. Co-chaperone of HSPA8/HSC70, it stimulates its ATPase activity. May inhibit both the autophosphorylation of EIF2AK2/PKR and the ability of EIF2AK2 to catalyze phosphorylation of the EIF2A. May inhibit EIF2AK3/PERK activity. This Rattus norvegicus (Rat) protein is DnaJ homolog subfamily C member 3 (Dnajc3).